A 419-amino-acid chain; its full sequence is DNA ligase (419 aa).

The interval 1-120 (MLNQFPGQLS…ARQKRGAHTN (120 aa)) is NTD. An AD domain region spans residues 121-317 (RGMIPPMLVK…NYHSPHLAKL (197 aa)). Lys151 (N6-AMP-lysine intermediate) is an active-site residue. The interval 318 to 419 (KPLLDAEFIL…REPINVLEII (102 aa)) is OB domain.

Belongs to the ATP-dependent DNA ligase family.

Its subcellular location is the virion. The catalysed reaction is ATP + (deoxyribonucleotide)n-3'-hydroxyl + 5'-phospho-(deoxyribonucleotide)m = (deoxyribonucleotide)n+m + AMP + diphosphate.. Very low-fidelity DNA ligase that seals nicks in double-stranded DNA during DNA repair. Together with the viral repair DNA polymerase X, fills the single nucleotide gaps generated by the AP endonuclease. It is not essential for viral replication and recombination. Displays a very low adenylation activity towards DNA with 3'-dideoxy- or 3'-amino-terminated nicks compared to regular nick DNA. This is DNA ligase from Ornithodoros (relapsing fever ticks).